Reading from the N-terminus, the 93-residue chain is Neutrophil cationic peptide 2 (93 aa).

A signal peptide spans 1-19 (MRTVPLFAACLLLTLMAQA). A propeptide spanning residues 20–62 (EPLPRAADHSDTKMKGDREDHVAVISFWEEESTSLQDAGAGAG) is cleaved from the precursor. 3 disulfide bridges follow: Cys65–Cys93, Cys67–Cys82, and Cys72–Cys92.

It belongs to the alpha-defensin family.

The protein localises to the secreted. Functionally, has antibiotic, anti-fungi and antiviral activity. The chain is Neutrophil cationic peptide 2 from Cavia porcellus (Guinea pig).